The following is a 499-amino-acid chain: Gypsy retrotransposon integrase-like protein 1 (499 aa).

The Integrase catalytic domain occupies K113–N270.

In Bos taurus (Bovine), this protein is Gypsy retrotransposon integrase-like protein 1 (GIN1).